Reading from the N-terminus, the 89-residue chain is Small ribosomal subunit protein uS15 (89 aa).

The protein belongs to the universal ribosomal protein uS15 family. As to quaternary structure, part of the 30S ribosomal subunit. Forms a bridge to the 50S subunit in the 70S ribosome, contacting the 23S rRNA.

Its function is as follows. One of the primary rRNA binding proteins, it binds directly to 16S rRNA where it helps nucleate assembly of the platform of the 30S subunit by binding and bridging several RNA helices of the 16S rRNA. Forms an intersubunit bridge (bridge B4) with the 23S rRNA of the 50S subunit in the ribosome. The chain is Small ribosomal subunit protein uS15 from Polynucleobacter necessarius subsp. necessarius (strain STIR1).